The primary structure comprises 837 residues: Amyloid-beta A4 precursor protein-binding family A member 1 (837 aa).

3 disordered regions span residues 1–93, 238–342, and 358–435; these read MNHL…DTAE, YDER…SKEK, and EEVK…ESRK. Acidic residues predominate over residues 23 to 38; sequence ESVEADLEHPEVEEEQ. Ser78, Ser242, Ser246, Ser248, Ser263, Ser280, and Ser285 each carry phosphoserine. Residues 226–314 form a munc-18-1 binding region; sequence YRQEALGARL…TPAGGRPDSP (89 aa). Basic and acidic residues predominate over residues 238–254; sequence YDERSDGESDSPEKEAE. The residue at position 305 (Thr305) is a Phosphothreonine. 2 positions are modified to phosphoserine: Ser313 and Ser367. A Phosphothreonine modification is found at Thr370. Residues 373–436 form an LIN-2/CASK binding region; the sequence is EPKEPIWVMR…ASTNKESRKS (64 aa). The segment covering 387-398 has biased composition (basic and acidic residues); it reads PTRDCDDQRPMD. Residues 399–418 are compositionally biased toward low complexity; it reads GDSPSPGSSSPLGAESSSTS. 4 positions are modified to phosphoserine: Ser401, Ser403, Ser408, and Ser568. Residues 457-643 enclose the PID domain; that stretch reads DGIIFAANYL…LLNTQDMYND (187 aa). The interval 626–641 is autoinhibitory helix linker; sequence LSQKEYSDLLNTQDMY. 2 consecutive PDZ domains span residues 656-742 and 747-822; these read DVFI…IVRC and TVLI…TMPA.

In terms of assembly, part of a multimeric complex containing STXBP1 and STX1A. Interacts with STXBP1. Also part of the brain-specific heterotrimeric complex LIN-10/X11-alpha, LIN-2/CASK, and LIN7. Component of the brain-specific heterotrimeric complex (LIN-10-LIN-2-LIN-7 complex) composed of at least APBA1, CASK, and LIN7, which associates with the motor protein KIF17 to transport vesicles along microtubules. Within the complex, interacts (via PDZ domain) with the motor protein KIF17; the interaction is direct and is required for association of KIF17 with the cargo that is to be transported. Both isoform 1 and isoform 2 bind to the cytoplasmic domain of amyloid protein (APP). Interacts (via PDZ 1 and 2 domains) with FSPB. Isoform 2, but not isoform 1, interacts (via its truncated PID domain) with active, GTP-bound RAB6A and RAB6B. As to expression, brain and spinal cord. Isoform 2 is expressed in testis and brain, but not detected in lung, liver or spleen.

It localises to the cytoplasm. Its subcellular location is the perinuclear region. The protein localises to the nucleus. The protein resides in the golgi apparatus. Functionally, putative function in synaptic vesicle exocytosis by binding to Munc18-1, an essential component of the synaptic vesicle exocytotic machinery. May modulate processing of the amyloid-beta precursor protein (APP) and hence formation of APP-beta. Component of the LIN-10-LIN-2-LIN-7 complex, which associates with the motor protein KIF17 to transport vesicles containing N-methyl-D-aspartate (NMDA) receptor subunit NR2B along microtubules. The protein is Amyloid-beta A4 precursor protein-binding family A member 1 (APBA1) of Homo sapiens (Human).